The primary structure comprises 409 residues: Arginine deiminase (409 aa).

Catalysis depends on cysteine 399, which acts as the Amidino-cysteine intermediate.

The protein belongs to the arginine deiminase family.

Its subcellular location is the cytoplasm. The enzyme catalyses L-arginine + H2O = L-citrulline + NH4(+). It participates in amino-acid degradation; L-arginine degradation via ADI pathway; carbamoyl phosphate from L-arginine: step 1/2. The sequence is that of Arginine deiminase from Borrelia duttonii (strain Ly).